The primary structure comprises 234 residues: Sugar fermentation stimulation protein A (234 aa).

Positions 201–220 (LLSEAQQRGVEILAYKAEIS) form a DNA-binding region, H-T-H motif.

Belongs to the SfsA family.

In terms of biological role, binds to DNA non-specifically. Could be a regulatory factor involved in maltose metabolism. The sequence is that of Sugar fermentation stimulation protein A from Shigella boydii serotype 4 (strain Sb227).